A 92-amino-acid polypeptide reads, in one-letter code: Large ribosomal subunit protein uL23c (92 aa).

The protein belongs to the universal ribosomal protein uL23 family. Part of the 50S ribosomal subunit.

The protein localises to the plastid. It localises to the chloroplast. Binds to 23S rRNA. In Chara vulgaris (Common stonewort), this protein is Large ribosomal subunit protein uL23c (rpl23).